The chain runs to 740 residues: E3 ubiquitin-protein ligase TRIM9 (740 aa).

The RING-type; degenerate zinc-finger motif lies at 7–30 (CPTCKQLYANPVLLPCFHALCLGC). Residues 64–73 (GNGGGAGGGA) are compositionally biased toward gly residues. Residues 64–114 (GNGGGAGGGAAAPVTNPNGPGTRHSSHSSAASTASSNTGSESVTSDQDQSD) form a disordered region. Residues 74 to 105 (AAPVTNPNGPGTRHSSHSSAASTASSNTGSES) are compositionally biased toward low complexity. The B box-type 1; atypical zinc finger occupies 195–244 (REALRCQMCETDPKVASLICEQCEIRYCDACRELTHPARGPLAKHTLVKP). The Zn(2+) site is built by Cys200, Cys203, Cys225, His230, Cys255, His258, Cys277, and His283. A B box-type 2 zinc finger spans residues 250–291 (QRESVCGEHEETLSQYCLSCKAPACGLCIGELRHQAHDVQSI). Residues 294–324 (TCKAQKTELSHNLQQLSEKARSTTEFIQRLK) are a coiled coil. The COS domain occupies 399 to 459 (LKETDSAAFL…ARAIDNLNFI (61 aa)). Residues 474 to 567 (APMTPTILPS…ELIGLQTAEV (94 aa)) form the Fibronectin type-III domain. The 188-residue stretch at 549–736 (NSAGEGEYSE…TMHTAMDAPK (188 aa)) folds into the B30.2/SPRY domain.

This sequence belongs to the TRIM/RBCC family. Interacts (via fibronectin type-III domain) with pico. Interacts (via SPRY domain) with netrin receptor fra.

It localises to the cell projection. The protein resides in the axon. The protein localises to the perikaryon. The catalysed reaction is S-ubiquitinyl-[E2 ubiquitin-conjugating enzyme]-L-cysteine + [acceptor protein]-L-lysine = [E2 ubiquitin-conjugating enzyme]-L-cysteine + N(6)-ubiquitinyl-[acceptor protein]-L-lysine.. Its pathway is protein modification; protein ubiquitination. In terms of biological role, E3 ubiquitin-protein ligase activity. During embryonic and larval development, regulates the pattern of axonal projections of class IV nociceptive sensory neurons (C4da) downstream of netrin receptor fra. Regulates fine-scale topography of C4da axon terminals upon neuronal activity. During eye development, consolidates the attachment of R8 photoreceptor growth cones to the target medulla layer, probably downstream of fra. The sequence is that of E3 ubiquitin-protein ligase TRIM9 from Drosophila melanogaster (Fruit fly).